The sequence spans 118 residues: Ly-6/neurotoxin-like protein 1 (118 aa).

Positions 1 to 22 (MTPLLTLFLVVLMGLPLAPVQA) are cleaved as a signal peptide. Residues 23-107 (LDCHVCAYNG…LAIPATLALA (85 aa)) form the UPAR/Ly6 domain. 5 disulfide bridges follow: Cys25–Cys48, Cys28–Cys35, Cys41–Cys66, Cys70–Cys87, and Cys88–Cys93. Ser95 carries GPI-anchor amidated serine lipidation. Positions 96–118 (AGLAIPATLALAPVLLATLWGLL) are cleaved as a propeptide — removed in mature form.

In terms of assembly, interacts with nAChRs containing alpha-4:beta-2 (CHRNA4:CHRNB2) and alpha-7 (CHRNA7) subunits. Interacts with CHRNA4 probably in the endoplasmic reticulum prior to nAChR pentameric assembly. Interacts with KCNA2/Potassium voltage-gated channel subfamily A member 2. In terms of tissue distribution, expressed in lung predominantly in airway epithelial cells, submucous glands, and smooth muscle cells, in endothelial and smooth muscle cells in vessel walls and in alveolar type II cells (at protein level). Also expressed in brain.

It localises to the cell membrane. The protein resides in the cell projection. It is found in the dendrite. Its subcellular location is the endoplasmic reticulum. Acts in different tissues through interaction to nicotinic acetylcholine receptors (nAChRs). The proposed role as modulator of nAChR activity seems to be dependent on the nAChR subtype and stoichiometry, and to involve an effect on nAChR trafficking and its cell surface expression, and on single channel properties of the nAChR inserted in the plasma membrane. Modulates functional properties of nicotinic acetylcholine receptors (nAChRs) to prevent excessive excitation, and hence neurodegeneration. Enhances desensitization by increasing both the rate and extent of desensitization of alpha-4:beta-2-containing nAChRs and slowing recovery from desensitization. Promotes large amplitude ACh-evoked currents through alpha-4:beta-2 nAChRs. Is involved in regulation of the nAChR pentameric assembly in the endoplasmic reticulum. Shifts stoichiometry from high sensitivity alpha-4(2):beta-2(3) to low sensitivity alpha-4(3):beta-2(2) nAChR. In vitro modulates alpha-3:beta-4-containing nAChRs. Reduces cell surface expression of (alpha-3:beta-4)(2):beta-4 and (alpha-3:beta-4)(2):alpha-5 nAChRs suggesting an interaction with nAChR alpha-3(-):(+)beta-4 subunit interfaces and an allosteric mode. Corresponding single channel effects characterized by decreased unitary conductance, altered burst proportions and enhanced desensitization/inactivation seem to depend on nAChR alpha:alpha subunit interfaces and are greater in (alpha-3:beta-2)(2):alpha-3 when compared to (alpha-3:beta-2)(2):alpha-5 nAChRs. Prevents plasticity in the primary visual cortex late in life. The sequence is that of Ly-6/neurotoxin-like protein 1 from Macaca mulatta (Rhesus macaque).